A 347-amino-acid chain; its full sequence is MILISDATLRDGNHAIRHQLSAAQIHAYARAADEAGIDIVEVGHGNGLGGSSCLLGQTPIGDRLMLETARAALRTSRLGVHFIPGLGKAADIALALEIGVDVVRVATHCTEANVSARFIEQTRVAGRTAFGVLMMSHMAPSDVLLAQAKLMERYGAQAVVLMDSAGYSTPSLVRAKVERLVDGLDIDVGFHAHNNLGLAVANSLVALEAGARIVDACVKGFGAGAGNTQLETLVAAMEREGHDTRTTFEHVMALARGTEAFLNPKTPHIQPANIASGLYGLFSGYVPHIQKAAQEFGVNEFELYKRLAERKLVAGQEDIIIEEASRLARERDVQRATDGVRISELSA.

One can recognise a Pyruvate carboxyltransferase domain in the interval 2-252; that stretch reads ILISDATLRD…DTRTTFEHVM (251 aa). Residue 10–11 participates in substrate binding; sequence RD. Asp11 lines the Mn(2+) pocket. The active-site Proton acceptor is His14. Residues Ser164 and His191 each contribute to the substrate site. Mn(2+)-binding residues include His191 and His193.

This sequence belongs to the 4-hydroxy-2-oxovalerate aldolase family.

The catalysed reaction is (S)-4-hydroxy-2-oxopentanoate = acetaldehyde + pyruvate. The chain is 4-hydroxy-2-oxovalerate aldolase (mhpE) from Burkholderia thailandensis (strain ATCC 700388 / DSM 13276 / CCUG 48851 / CIP 106301 / E264).